A 224-amino-acid polypeptide reads, in one-letter code: DNA mismatch repair protein MutH (224 aa).

This sequence belongs to the MutH family.

Its subcellular location is the cytoplasm. Its function is as follows. Sequence-specific endonuclease that cleaves unmethylated GATC sequences. It is involved in DNA mismatch repair. This is DNA mismatch repair protein MutH from Shewanella amazonensis (strain ATCC BAA-1098 / SB2B).